The sequence spans 260 residues: MHCTVFFLLIACAKSSYGQTRSVSTAKSESKSDEYSYNSDAIDQSRLLRGAVNPVSENMALRKFIFDMPEMLRPEHFEPIFINPAAVKEVIKDYLAYGEALCGSGYDPRLLALFGVRPTVLKQELMKAKGVTLSVMPSSRKRPRALDEVESEVENFRNVLKDFFIPPTTTNPSKLIPDDIETLVPEHVSAHFNSLVYLMYFAVLHFDSQELATMSSSVLLKYALQKNLLLREKIESGTLGEWERDFRLMRVLNVYKSEQT.

Residues methionine 1–glycine 18 form the signal peptide. The RxLR signature appears at arginine 46 to arginine 49. The short motif at methionine 136–glutamate 148 is the Nuclear localuization signal (NLS) element.

It belongs to the RxLR effector family.

It is found in the secreted. It localises to the host nucleus. Secreted effector that triggers a robust hypersensitive response (HR) in Lactuca serriola LS102. The response to BLN06 was visible as strong necrosis. Although effector recognition is frequently associated with single dominant R gene loci, the recognition of BLR38 requires 2 unlinked loci that display incomplete dominance. The chain is RxLR effector protein BLR38 from Bremia lactucae (Lettuce downy mildew).